Consider the following 397-residue polypeptide: Cathepsin E (397 aa).

An N-terminal signal peptide occupies residues 1–20; the sequence is MKPLLVLLLLLLLDLAQAQG. The propeptide at 21–59 is activation peptide; that stretch reads ALHRVPLRRHQSLRKKLRAQGQLSEFWRSHNLDMTRLSE. One can recognise a Peptidase A1 domain in the interval 79–393; sequence YFGTISIGTP…DRGNNQVGLA (315 aa). N91 carries an N-linked (GlcNAc...) asparagine glycan. Residue D97 is part of the active site. 2 disulfides stabilise this stretch: C110–C115 and C273–C277. D282 is an active-site residue. An N-linked (GlcNAc...) asparagine glycan is attached at N323.

It belongs to the peptidase A1 family. As to quaternary structure, homodimer; disulfide-linked. In terms of processing, glycosylated. The nature of the carbohydrate chain varies between cell types. In fibroblasts, the proenzyme contains a high mannose-type oligosaccharide, while the mature enzyme contains a complex-type oligosaccharide. As to expression, expressed abundantly in the stomach, club cells and alveolar macrophages of the lung, brain microglia, spleen and activated B-lymphocytes. Not expressed in resting B-lymphocytes.

The protein localises to the endosome. It carries out the reaction Similar to cathepsin D, but slightly broader specificity.. Its function is as follows. May have a role in immune function. Probably involved in the processing of antigenic peptides during MHC class II-mediated antigen presentation. May play a role in activation-induced lymphocyte depletion in the thymus, and in neuronal degeneration and glial cell activation in the brain. The sequence is that of Cathepsin E (Ctse) from Mus musculus (Mouse).